Here is an 810-residue protein sequence, read N- to C-terminus: Phenylalanine--tRNA ligase beta subunit (810 aa).

Positions 39-150 (RTWANGVVVG…ENLPLGSDVR (112 aa)) constitute a tRNA-binding domain. One can recognise a B5 domain in the interval 411-495 (TWSRSIFLRL…RLYGYDNFCD (85 aa)). Asp473, Asp479, Glu482, and Glu483 together coordinate Mg(2+). The FDX-ACB domain occupies 716-809 (STYPASDRDI…LVEKFGVNLR (94 aa)).

The protein belongs to the phenylalanyl-tRNA synthetase beta subunit family. Type 1 subfamily. As to quaternary structure, tetramer of two alpha and two beta subunits. It depends on Mg(2+) as a cofactor.

The protein resides in the cytoplasm. The catalysed reaction is tRNA(Phe) + L-phenylalanine + ATP = L-phenylalanyl-tRNA(Phe) + AMP + diphosphate + H(+). The sequence is that of Phenylalanine--tRNA ligase beta subunit from Trichormus variabilis (strain ATCC 29413 / PCC 7937) (Anabaena variabilis).